The chain runs to 1187 residues: DNA-directed RNA polymerase subunit beta (1187 aa).

A disordered region spans residues 1150–1187 (KDEDDDPASSADDLGFNIGARPDAAAKEDQKAEEPEYQ). Over residues 1173–1187 (AAAKEDQKAEEPEYQ) the composition is skewed to basic and acidic residues.

Belongs to the RNA polymerase beta chain family. As to quaternary structure, the RNAP catalytic core consists of 2 alpha, 1 beta, 1 beta' and 1 omega subunit. When a sigma factor is associated with the core the holoenzyme is formed, which can initiate transcription.

It carries out the reaction RNA(n) + a ribonucleoside 5'-triphosphate = RNA(n+1) + diphosphate. In terms of biological role, DNA-dependent RNA polymerase catalyzes the transcription of DNA into RNA using the four ribonucleoside triphosphates as substrates. The polypeptide is DNA-directed RNA polymerase subunit beta (Bifidobacterium longum subsp. infantis (strain ATCC 15697 / DSM 20088 / JCM 1222 / NCTC 11817 / S12)).